Reading from the N-terminus, the 458-residue chain is Light-independent protochlorophyllide reductase subunit N (458 aa).

The [4Fe-4S] cluster site is built by C20, C45, and C105.

The protein belongs to the BchN/ChlN family. As to quaternary structure, protochlorophyllide reductase is composed of three subunits; ChlL, ChlN and ChlB. Forms a heterotetramer of two ChlB and two ChlN subunits. [4Fe-4S] cluster is required as a cofactor.

It localises to the plastid. Its subcellular location is the chloroplast. It carries out the reaction chlorophyllide a + oxidized 2[4Fe-4S]-[ferredoxin] + 2 ADP + 2 phosphate = protochlorophyllide a + reduced 2[4Fe-4S]-[ferredoxin] + 2 ATP + 2 H2O. The protein operates within porphyrin-containing compound metabolism; chlorophyll biosynthesis (light-independent). Component of the dark-operative protochlorophyllide reductase (DPOR) that uses Mg-ATP and reduced ferredoxin to reduce ring D of protochlorophyllide (Pchlide) to form chlorophyllide a (Chlide). This reaction is light-independent. The NB-protein (ChlN-ChlB) is the catalytic component of the complex. This is Light-independent protochlorophyllide reductase subunit N from Angiopteris evecta (Mule's foot fern).